We begin with the raw amino-acid sequence, 129 residues long: MSKEKTPRSLGDNEAKAVARMLRVSPQKLNLVAQLIRGKKVDKALADLEFSRKRIAYDVKKTLESAIANAENNHSLDVDDLIVAEAFVGKAMVMKRFSPRARGRSGRIEKPFAHLTIVVREVTAVAAGA.

It belongs to the universal ribosomal protein uL22 family. In terms of assembly, part of the 50S ribosomal subunit.

Functionally, this protein binds specifically to 23S rRNA; its binding is stimulated by other ribosomal proteins, e.g. L4, L17, and L20. It is important during the early stages of 50S assembly. It makes multiple contacts with different domains of the 23S rRNA in the assembled 50S subunit and ribosome. Its function is as follows. The globular domain of the protein is located near the polypeptide exit tunnel on the outside of the subunit, while an extended beta-hairpin is found that lines the wall of the exit tunnel in the center of the 70S ribosome. This chain is Large ribosomal subunit protein uL22, found in Beijerinckia indica subsp. indica (strain ATCC 9039 / DSM 1715 / NCIMB 8712).